A 290-amino-acid chain; its full sequence is Secreted chorismate mutase (290 aa).

A signal peptide spans 1-21; that stretch reads MKLSVSIFVLLAVSAFGGGSA. The segment at 117–140 is KWL1-binding extensive loop region (ELR); it reads VVLSRDTVLDKPVVGKGIFPIGRR. 2 N-linked (GlcNAc...) asparagine glycosylation sites follow: N159 and N208.

As to quaternary structure, homodimer. Forms a heterodimer with the host cytosolic chorismate mutase CM2. Interacts with the host kiwellin KWL1 which acts as a defense protein that protects maize from infection.

It localises to the secreted. Its subcellular location is the host cytoplasm. The protein resides in the host cytosol. It carries out the reaction chorismate = prephenate. Its activity is regulated as follows. Contrary to classical chorismate mutases, CMU1 is not subject to allosteric regulation by tryptophan and tyrosine. Activity is decreased in a non-competitive and allosteric manner by the binding of the host defense kiwellin KWL1 which probably blocks substrate access to the active site of CMU1. Its function is as follows. Secreted chorismate mutase that is one component of a cocktail of effectors shaping the host metabolome and acting as virulence factors. The enzyme is taken up by plant cells, can spread to neighboring cells where it affects the biosynthesis of the plant immune signal salicylic acid by channelling chorismate into the phenylpropanoid pathway. Interferes with the activity of host cytosolic chorismate mutase CM2 through heterodimerization. This is Secreted chorismate mutase (CMU1) from Mycosarcoma maydis (Corn smut fungus).